We begin with the raw amino-acid sequence, 643 residues long: MWKFNKKLARLTYRLYSSSGPSSPLHGKKKLPQNLKFVVLNPTQSGLVKNDQKQPRHRPSKKRSHKETGDNNLDFGSKLLVFEKQNSLDSALNSIRLKKPTSASLPSLEYNALLQSLTSSYNRYQLREFISTHQPDSSSHLTHWKKSKLSQYIIEKIWNCQPISTPTTPTGIKSTSLTFQFDSPREIFLLLITQNGKILTNFNKLGLTFIISIQDNELTVKGSPSLLKYAEISLNKIWSNITHENVRMYSLMPSKDVINLIQKETHTFFEYLPDLQMYKISALSTKKISMAKVFLLNAVASNPNTTQHHHTIASPALKTELYPFNNTLENLDWLNKSQDWARLQSVVPKNCTDLMTPTENATPELTDAQVSQFESSLSKNIPSLSPSDSISQSLSITLGHSLQSASFSSIFQPLIHKSFISKLLNLPMYKESSSSAVPVPVPLDQHLITNAHQSFIQLNFTPVPPTSGSSSSPFLQIWFEIDEFDNIVTTSMRPLLKLQENSVILRTPQCQTDYKITSDYIQDLLPDFDQTNPDAWLSEQKGLQEFLLKSHWKLNKYQNLMKKINISLPDNLIQQYQLTDVLTHRVLNLRFPTNTAQDDKYIIQYSDISRGFLNNGSYRQLDFINVNPSETSLKTFINDVLSF.

Positions 43-72 (TQSGLVKNDQKQPRHRPSKKRSHKETGDNN) are disordered. A compositionally biased stretch (basic residues) spans 55 to 65 (PRHRPSKKRSH).

It belongs to the SLS1 family.

Its subcellular location is the mitochondrion inner membrane. Involved in aerobic respiration where it is required for assembly of respiratory chain enzyme complexes III and IV. Also has a role in mitochondrial gene expression. May be part of a mitochondrial membrane-associated RNA-shuttling system, delivering NAM1-associated transcripts to the translation machinery. This Saccharomyces cerevisiae (strain ATCC 204508 / S288c) (Baker's yeast) protein is Sigma-like sequence protein 1, mitochondrial (SLS1).